The sequence spans 466 residues: Glycosyl hydrolase family 109 protein (466 aa).

A signal peptide (tat-type signal) is located at residues 1–30; sequence MENTRRSFLKKVSAAGIGAAGLAMAGNAGA. NAD(+)-binding positions include 59 to 60, aspartate 81, 130 to 133, 151 to 152, and asparagine 180; these read SR, WEWH, and EV. Tyrosine 209 lines the substrate pocket. Residue 241–245 participates in NAD(+) binding; sequence AEAQW. Residues arginine 246, 258–261, and tyrosine 340 each bind substrate; that span reads YPTH. Residue tyrosine 258 participates in NAD(+) binding.

Belongs to the Gfo/Idh/MocA family. Glycosyl hydrolase 109 subfamily. Requires NAD(+) as cofactor. Post-translationally, predicted to be exported by the Tat system. The position of the signal peptide cleavage has not been experimentally proven.

Its function is as follows. Glycosidase. The polypeptide is Glycosyl hydrolase family 109 protein (Parabacteroides distasonis (strain ATCC 8503 / DSM 20701 / CIP 104284 / JCM 5825 / NCTC 11152)).